The following is a 250-amino-acid chain: Homeobox protein DLL-1 (250 aa).

Disordered stretches follow at residues 40-66 and 84-106; these read YPSL…SGSN and SPYL…PDQQ. A compositionally biased stretch (polar residues) spans 84-98; the sequence is SPYLQSCNSNTTTQS. Positions 125 to 184 form a DNA-binding region, homeobox; the sequence is IRKPRTIYSSLQLQALNHRFQQTQYLALPERAELAASLGVTQTQVKIWFQNKRSKYKKLI.

This sequence belongs to the distal-less homeobox family.

It localises to the nucleus. The chain is Homeobox protein DLL-1 (dll1) from Xenopus laevis (African clawed frog).